The primary structure comprises 353 residues: Nuclear hormone receptor family member nhr-27 (353 aa).

The nuclear receptor DNA-binding region spans 24-102 (VSNCVVCGRL…KGMLDLSRYT (79 aa)). 2 NR C4-type zinc fingers span residues 27–47 (CVVCGRLTSLFNYGAHSCSAC) and 64–85 (CKYSGNCFENFKRAIHFECKFC). The region spanning 119–351 (ETLFLTMTVS…SQVHQDVIEF (233 aa)) is the NR LBD domain. Residues 340–351 (QPSQVHQDVIEF) form an AF-2 region.

Belongs to the nuclear hormone receptor family.

The protein localises to the nucleus. Ligand-activated transcription factor. Involved in lifespan extension in a manner dependent upon mitochondrial function. The protein is Nuclear hormone receptor family member nhr-27 of Caenorhabditis elegans.